The primary structure comprises 793 residues: Lon protease 1 (793 aa).

Residues 8–202 form the Lon N-terminal domain; the sequence is VPVIPLKNSV…KLLDRLQELK (195 aa). Position 354 to 361 (354 to 361) interacts with ATP; it reads GPPGVGKT. The region spanning 590–770 is the Lon proteolytic domain; the sequence is LLPPGVVTGL…NEVLKITLGV (181 aa). Catalysis depends on residues Ser676 and Lys719.

Belongs to the peptidase S16 family. Homohexamer. Organized in a ring with a central cavity.

The protein resides in the cytoplasm. It carries out the reaction Hydrolysis of proteins in presence of ATP.. ATP-dependent serine protease that mediates the selective degradation of mutant and abnormal proteins as well as certain short-lived regulatory proteins. Required for cellular homeostasis and for survival from DNA damage and developmental changes induced by stress. Degrades polypeptides processively to yield small peptide fragments that are 5 to 10 amino acids long. Binds to DNA in a double-stranded, site-specific manner. The sequence is that of Lon protease 1 from Bdellovibrio bacteriovorus (strain ATCC 15356 / DSM 50701 / NCIMB 9529 / HD100).